We begin with the raw amino-acid sequence, 676 residues long: APGARPAASRERGHKSREERCGERGAAAGRRARGAMLEAMEVPSHSRQLLLQLNTQRTKGFLCDVIIVVQNALFRAHKNILAASSAYLKSLVVHDNLLNLDHEMVSPGIFRLILDFIYTGRLGECEPGGEQSLGAVLAAASYLQIPGLVALCKKKLKRSGKYCHLRGGYAPYKLGRGLRATTPVIQACYSGTPRPVDLQPVEPAAPLNTQCGELYASASQGTPLHPHGLCPPERHCSPPCGLDLSKKSPTGPSAQLLPTDRLLPAEPREPSLPPRHDSPPVSGGLLAGHPAAYKDSPPGGEPGGHPHATDPFRSTPPCAEPPLPRGDGRELMYRWMKHEPLGPYLDEGEAEKELEREEKAESPPAAPQPRYPSVESNDLEPDNSTSEETGSSEGPSPGDALDRYCNHLGYEPESLGDNLYVCIPCGKGFPSSEQLNAHVEAHNEEELYHKAAAEQAVPFLDKGGAGLGDILRPYRCSSCDKSYKDPATLRQHEKTHWLTRPYPCTICGKKFTQRGTMTRHMRSHLGLKPFACDACGMRFTRQYRLTEHMRIHSGEKPYECQVCGGKFAQQRNLISHMKMHAAGPDGKAKLDFPDSVYAMARLTADQLGLKQEKAAELLSHTSHFLSDPKAMESLYPLAKFTAEHLGLSQDKAAEVLAQAPHLHADAARTIERYSPP.

Residues Ala1–Ala27 form a disordered region. Over residues Ala8–Glu23 the composition is skewed to basic and acidic residues. A BTB domain is found at Cys63–Glu126. A binding to CtBP region spans residues Gly241–Ser245. Disordered regions lie at residues Pro264–Gly326 and Gly342–Cys405. 2 stretches are compositionally biased toward basic and acidic residues: residues Glu266–Ser278 and Glu351–Glu361. Residues Ser384–Gly398 are compositionally biased toward low complexity. 5 C2H2-type zinc fingers span residues Tyr420–Leu447, Tyr474–Pro501, Tyr502–Pro529, Phe530–Pro557, and Tyr558–Asp585.

This sequence belongs to the krueppel C2H2-type zinc-finger protein family. Hic subfamily. In terms of assembly, interacts with CtBP. Isoform 1 is highly expressed in kidney and lung. Expression of isoform 2 is higher in the lens, retina and stomach, and extremely low in heart, muscle, kidney and lung. Isoform 3 is weakly expressed in heart, kidney and lens.

The protein localises to the nucleus. Its function is as follows. Binds specifically to the gamma F-1-binding motif of the gamma F-crystallin promoter. May have a regulatory role in sclerotome specification and/or differentiation. Isoform 2 functions as a transcriptional repressor in lens cells. This chain is Hypermethylated in cancer 1 protein (HIC1), found in Gallus gallus (Chicken).